Here is a 562-residue protein sequence, read N- to C-terminus: MFS-type transporter calB (562 aa).

Over residues 1-16 (MDEVTRTAQRSPSITE) the composition is skewed to polar residues. Residues 1-45 (MDEVTRTAQRSPSITETHAGETKLAGPGEKEGDVESPVDPSADSE) form a disordered region. Residues 57–77 (FAILASVTLSAFLMLLDGSII) traverse the membrane as a helical segment. Asn83 is a glycosylation site (N-linked (GlcNAc...) asparagine). The next 13 membrane-spanning stretches (helical) occupy residues 94–113 (IGWYTAAYQLASAALQPLSG), 123–143 (WTYLFFFGLFELGSLICGVAN), 154–174 (VAGLGSSGLLNGGMTIIAGAV), 184–204 (GIYLGISQLGIVCGPLIGGAL), 213–233 (CFYINLPVGAVTAILLLFLQV), 256–276 (LIGFTLFAPAAIMVLLALYYG), 284–304 (SSQVIGLFCGAGVTIIVFALW), 329–349 (INGAALVASILVAAQYLPIYF), 362–382 (VNTLPGILSQLLTVILSGVLV), 389–409 (LPFAAAGSAISAVGNGIVTLF), 418–438 (WIGYQIVLGSGRGIGMQMGII), 451–471 (VGIAFMIFCQNFAGAIFVVVG), and 530–550 (VFYLLMSLSLAGFVAAFGMGW). N-linked (GlcNAc...) asparagine glycosylation occurs at Asn557.

Belongs to the major facilitator superfamily. TCR/Tet family.

It localises to the cell membrane. Functionally, MFS-type transporter; part of the gene cluster that mediates the biosynthesis of calbistrin A and related compounds. Calbistrin A is a secondary metabolite with an interesting structure that was recently found to have bioactivity against leukemia cells. It consists of two polyketides linked by an ester bond: a bicyclic decalin containing polyketide and a linear 12 carbon dioic acid structure. Required for the secretion of calbistrin A and calbistrin C, as well as of related compounds decumbenone A, B and C. The sequence is that of MFS-type transporter calB from Penicillium decumbens.